Here is a 452-residue protein sequence, read N- to C-terminus: UDP-N-acetylmuramate--L-alanine ligase (452 aa).

110–116 (GTHGKTT) provides a ligand contact to ATP.

Belongs to the MurCDEF family.

It is found in the cytoplasm. It carries out the reaction UDP-N-acetyl-alpha-D-muramate + L-alanine + ATP = UDP-N-acetyl-alpha-D-muramoyl-L-alanine + ADP + phosphate + H(+). Its pathway is cell wall biogenesis; peptidoglycan biosynthesis. Cell wall formation. This Francisella philomiragia subsp. philomiragia (strain ATCC 25017 / CCUG 19701 / FSC 153 / O#319-036) protein is UDP-N-acetylmuramate--L-alanine ligase.